A 361-amino-acid polypeptide reads, in one-letter code: Phosphate acyltransferase (361 aa).

A disordered region spans residues 340 to 361 (VPADGAATEQGPTPRRIAPPRT).

Belongs to the PlsX family. As to quaternary structure, homodimer. Probably interacts with PlsY.

It is found in the cytoplasm. The catalysed reaction is a fatty acyl-[ACP] + phosphate = an acyl phosphate + holo-[ACP]. It participates in lipid metabolism; phospholipid metabolism. Its function is as follows. Catalyzes the reversible formation of acyl-phosphate (acyl-PO(4)) from acyl-[acyl-carrier-protein] (acyl-ACP). This enzyme utilizes acyl-ACP as fatty acyl donor, but not acyl-CoA. This Anaeromyxobacter dehalogenans (strain 2CP-1 / ATCC BAA-258) protein is Phosphate acyltransferase.